The sequence spans 204 residues: Somatotropin (204 aa).

The N-terminal stretch at 1 to 17 (MDRVLLLLSVLSLGVSS) is a signal peptide. Q18 is subject to Pyrrolidone carboxylic acid. Residue H36 coordinates Zn(2+). C69 and C177 are joined by a disulfide. E186 contacts Zn(2+). A disulfide bridge links C194 with C202.

Belongs to the somatotropin/prolactin family.

The protein localises to the secreted. In terms of biological role, growth hormone plays an important role in growth control and is involved in the regulation of several anabolic processes. Implicated as an osmoregulatory substance important for seawater adaptation. The protein is Somatotropin (gh) of Sciaenops ocellatus (Red drum).